The following is a 1289-amino-acid chain: DNA-directed RNA polymerase subunit beta (1289 aa).

The protein belongs to the RNA polymerase beta chain family. The RNAP catalytic core consists of 2 alpha, 1 beta, 1 beta' and 1 omega subunit. When a sigma factor is associated with the core the holoenzyme is formed, which can initiate transcription.

The catalysed reaction is RNA(n) + a ribonucleoside 5'-triphosphate = RNA(n+1) + diphosphate. In terms of biological role, DNA-dependent RNA polymerase catalyzes the transcription of DNA into RNA using the four ribonucleoside triphosphates as substrates. This Methylacidiphilum infernorum (isolate V4) (Methylokorus infernorum (strain V4)) protein is DNA-directed RNA polymerase subunit beta.